A 121-amino-acid chain; its full sequence is Large ribosomal subunit protein bL20 (121 aa).

Belongs to the bacterial ribosomal protein bL20 family.

In terms of biological role, binds directly to 23S ribosomal RNA and is necessary for the in vitro assembly process of the 50S ribosomal subunit. It is not involved in the protein synthesizing functions of that subunit. This is Large ribosomal subunit protein bL20 from Ruegeria sp. (strain TM1040) (Silicibacter sp.).